The chain runs to 606 residues: Large subunit GTPase 1 homolog (606 aa).

The interval 1 to 21 (MGKKNKGGAPNLGRQLIKDRF) is disordered. Residues 165-395 (WRQLWRVVER…LCDCPGLVMP (231 aa)) form the CP-type G domain. 213 to 216 (NKSD) is a binding site for GTP. 2 positions are modified to phosphoserine: Ser-276 and Ser-279. Residues 344–351 (GYPNVGKS) and 388–391 (DCPG) contribute to the GTP site. Residues 574–606 (LVAGNDPAAKPWRHVKKERREKLRKKFSHLDEH) form a disordered region. Residues 584–600 (PWRHVKKERREKLRKKF) show a composition bias toward basic residues.

This sequence belongs to the TRAFAC class YlqF/YawG GTPase family. LSG1 subfamily. Expressed in larval serotonergic neurons.

The protein localises to the cytoplasm. Functionally, GTPase required for the nuclear export of the 60S ribosomal subunit. Probably acts by mediating the release of Nmd3 from the 60S ribosomal subunit after export into the cytoplasm. Regulator of body size; acts in serotonergic neurons to regulate insulin signaling and thus exerts global growth control. This is Large subunit GTPase 1 homolog (Ns3) from Drosophila melanogaster (Fruit fly).